A 103-amino-acid polypeptide reads, in one-letter code: Co-chaperonin GroES (103 aa).

The protein belongs to the GroES chaperonin family. Heptamer of 7 subunits arranged in a ring. Interacts with the chaperonin GroEL.

The protein localises to the cytoplasm. Functionally, together with the chaperonin GroEL, plays an essential role in assisting protein folding. The GroEL-GroES system forms a nano-cage that allows encapsulation of the non-native substrate proteins and provides a physical environment optimized to promote and accelerate protein folding. GroES binds to the apical surface of the GroEL ring, thereby capping the opening of the GroEL channel. The protein is Co-chaperonin GroES of Parasynechococcus marenigrum (strain WH8102).